The primary structure comprises 395 residues: MKRFLLCSFALVLLYPAGIDMYLVGLPRIAADLNASEAQLHIAFSVYLAGMATAMLFAGKIADQSGRKPVAIVGALVFMMASLLCSRASEGSLFLSGRFLQGVGAGGCYVVAFAILRDTLDEHRRAKVLSLLNGITCIVPVLAPVVGHLIMLRFPWQSLFYTMSAMGIIVGLLSLFILRETRPVRLAPRDLSRSSPAAESLINRFFVSRLAITTLSVSVILTFVNASPVLLMEVMGFSRGDYAITMALTAGVSMVVSFSTPFALGLFKPRTLMLVSQGLFLTAGVTLSLAHTNTVTLFGLTLICAGFSVGFGVAMSQALGPFSLRAGVASSTLGIAQVCGSSLWIWLAAILGISAMNMLIGILIGCSIVSILLIFSVTPNRSVAEHEEIPYQSRP.

The Cytoplasmic portion of the chain corresponds to 1-3 (MKR). The chain crosses the membrane as a helical span at residues 4–24 (FLLCSFALVLLYPAGIDMYLV). Residues 25–41 (GLPRIAADLNASEAQLH) are Periplasmic-facing. Residues 42–62 (IAFSVYLAGMATAMLFAGKIA) traverse the membrane as a helical segment. Residues 63-68 (DQSGRK) lie on the Cytoplasmic side of the membrane. A helical transmembrane segment spans residues 69–89 (PVAIVGALVFMMASLLCSRAS). Over 90–92 (EGS) the chain is Periplasmic. The chain crosses the membrane as a helical span at residues 93 to 113 (LFLSGRFLQGVGAGGCYVVAF). The Cytoplasmic segment spans residues 114–130 (AILRDTLDEHRRAKVLS). A helical membrane pass occupies residues 131 to 151 (LLNGITCIVPVLAPVVGHLIM). Topologically, residues 152–157 (LRFPWQ) are periplasmic. A helical transmembrane segment spans residues 158-178 (SLFYTMSAMGIIVGLLSLFIL). Residues 179–216 (RETRPVRLAPRDLSRSSPAAESLINRFFVSRLAITTLS) lie on the Cytoplasmic side of the membrane. A helical membrane pass occupies residues 217-237 (VSVILTFVNASPVLLMEVMGF). Residues 238–246 (SRGDYAITM) are Periplasmic-facing. The helical transmembrane segment at 247-267 (ALTAGVSMVVSFSTPFALGLF) threads the bilayer. At 268–270 (KPR) the chain is on the cytoplasmic side. The helical transmembrane segment at 271-291 (TLMLVSQGLFLTAGVTLSLAH) threads the bilayer. Residues 292-294 (TNT) are Periplasmic-facing. A helical transmembrane segment spans residues 295 to 315 (VTLFGLTLICAGFSVGFGVAM). The Cytoplasmic portion of the chain corresponds to 316 to 327 (SQALGPFSLRAG). A helical transmembrane segment spans residues 328–350 (VASSTLGIAQVCGSSLWIWLAAI). Residues 351–354 (LGIS) are Periplasmic-facing. The helical transmembrane segment at 355–377 (AMNMLIGILIGCSIVSILLIFSV) threads the bilayer. At 378–395 (TPNRSVAEHEEIPYQSRP) the chain is on the cytoplasmic side.

The protein belongs to the major facilitator superfamily. DHA1 family. MdtL (TC 2.A.1.2.22) subfamily.

It localises to the cell inner membrane. The polypeptide is Multidrug resistance protein MdtL (mdtL) (Salmonella typhimurium (strain LT2 / SGSC1412 / ATCC 700720)).